The primary structure comprises 458 residues: Phosphoglucosamine mutase (458 aa).

Residue serine 108 is the Phosphoserine intermediate of the active site. Mg(2+) contacts are provided by serine 108, aspartate 247, aspartate 249, and aspartate 251. Serine 108 bears the Phosphoserine mark.

The protein belongs to the phosphohexose mutase family. The cofactor is Mg(2+). Post-translationally, activated by phosphorylation.

The catalysed reaction is alpha-D-glucosamine 1-phosphate = D-glucosamine 6-phosphate. Functionally, catalyzes the conversion of glucosamine-6-phosphate to glucosamine-1-phosphate. The protein is Phosphoglucosamine mutase of Nitrosomonas eutropha (strain DSM 101675 / C91 / Nm57).